Consider the following 397-residue polypeptide: Succinate--CoA ligase [ADP-forming] subunit beta (397 aa).

In terms of domain architecture, ATP-grasp spans 9 to 254 (KALLRSYGAP…ETEEDPKELA (246 aa)). ATP-binding positions include Lys-46, 53-55 (GRG), Glu-109, Ser-112, and Glu-117. Mg(2+) is bound by residues Asn-209 and Asp-223. Residues Asn-274 and 331–333 (GIM) each bind substrate.

It belongs to the succinate/malate CoA ligase beta subunit family. Heterotetramer of two alpha and two beta subunits. It depends on Mg(2+) as a cofactor.

The catalysed reaction is succinate + ATP + CoA = succinyl-CoA + ADP + phosphate. It catalyses the reaction GTP + succinate + CoA = succinyl-CoA + GDP + phosphate. It functions in the pathway carbohydrate metabolism; tricarboxylic acid cycle; succinate from succinyl-CoA (ligase route): step 1/1. Functionally, succinyl-CoA synthetase functions in the citric acid cycle (TCA), coupling the hydrolysis of succinyl-CoA to the synthesis of either ATP or GTP and thus represents the only step of substrate-level phosphorylation in the TCA. The beta subunit provides nucleotide specificity of the enzyme and binds the substrate succinate, while the binding sites for coenzyme A and phosphate are found in the alpha subunit. This chain is Succinate--CoA ligase [ADP-forming] subunit beta, found in Cereibacter sphaeroides (strain ATCC 17025 / ATH 2.4.3) (Rhodobacter sphaeroides).